A 157-amino-acid chain; its full sequence is Phosphopantetheine adenylyltransferase (157 aa).

Thr-10 contributes to the substrate binding site. ATP contacts are provided by residues 10–11 and His-18; that span reads TF. Lys-42, Leu-74, and Arg-88 together coordinate substrate. Residues 89–91, Glu-99, and 124–130 each bind ATP; these read GLR and NAFISSS.

Belongs to the bacterial CoaD family. In terms of assembly, homohexamer. Requires Mg(2+) as cofactor.

The protein localises to the cytoplasm. The enzyme catalyses (R)-4'-phosphopantetheine + ATP + H(+) = 3'-dephospho-CoA + diphosphate. Its pathway is cofactor biosynthesis; coenzyme A biosynthesis; CoA from (R)-pantothenate: step 4/5. In terms of biological role, reversibly transfers an adenylyl group from ATP to 4'-phosphopantetheine, yielding dephospho-CoA (dPCoA) and pyrophosphate. This Helicobacter acinonychis (strain Sheeba) protein is Phosphopantetheine adenylyltransferase.